A 317-amino-acid polypeptide reads, in one-letter code: Methionyl-tRNA formyltransferase (317 aa).

Position 110–113 (110–113 (SLLP)) interacts with (6S)-5,6,7,8-tetrahydrofolate.

This sequence belongs to the Fmt family.

It carries out the reaction L-methionyl-tRNA(fMet) + (6R)-10-formyltetrahydrofolate = N-formyl-L-methionyl-tRNA(fMet) + (6S)-5,6,7,8-tetrahydrofolate + H(+). Its function is as follows. Attaches a formyl group to the free amino group of methionyl-tRNA(fMet). The formyl group appears to play a dual role in the initiator identity of N-formylmethionyl-tRNA by promoting its recognition by IF2 and preventing the misappropriation of this tRNA by the elongation apparatus. In Bacillus pumilus (strain SAFR-032), this protein is Methionyl-tRNA formyltransferase.